We begin with the raw amino-acid sequence, 78 residues long: UPF0154 protein SSU98_1719 (78 aa).

Residues 3–23 (LGLAILLIVLAFAGGVALGIY) form a helical membrane-spanning segment.

The protein belongs to the UPF0154 family.

The protein localises to the cell membrane. The polypeptide is UPF0154 protein SSU98_1719 (Streptococcus suis (strain 98HAH33)).